The following is a 173-amino-acid chain: Lipid A deacylase PagL (173 aa).

The signal sequence occupies residues 1 to 23; the sequence is MKKLLPLAVLAALSSVHVASAQA. The Periplasmic portion of the chain corresponds to 25-28; it reads DVSA. A beta stranded transmembrane segment spans residues 29–32; that stretch reads AVGA. A topological domain (periplasmic) is located at residue T33. Residues 34–49 form a beta stranded membrane-spanning segment; sequence GQSGMTYRLGLSWDWD. Over 50–56 the chain is Extracellular; the sequence is KSWWQTS. A beta stranded membrane pass occupies residues 57-71; the sequence is TGRLTGYWDAGYTYW. The Periplasmic portion of the chain corresponds to 72 to 73; that stretch reads EG. A beta stranded membrane pass occupies residues 74-89; sequence GDEGAGKHSLSFAPVF. Position 90 (V90) is a topological domain, extracellular. Residues 91–93 traverse the membrane as a beta stranded segment; it reads YEF. The Periplasmic segment spans residues 94–95; the sequence is AG. The beta stranded transmembrane segment at 96–98 threads the bilayer; sequence DSI. At 99 to 100 the chain is on the extracellular side; it reads KP. A beta stranded membrane pass occupies residues 101–115; the sequence is FIEAGIGVAAFSGTR. Residues 116 to 117 lie on the Periplasmic side of the membrane; that stretch reads VG. A beta stranded membrane pass occupies residues 118-128; the sequence is DQNLGSSLNFE. Topologically, residues 129-138 are extracellular; sequence DRIGAGLKFA. Residues 139-148 traverse the membrane as a beta stranded segment; that stretch reads NGQSVGVRAI. Active-site charge relay system residues include H149, S151, and E163. At 149–173 the chain is on the periplasmic side; it reads HYSNAGLKQPNDGIESYSLFYKIPI.

The protein belongs to the PagL family. In terms of assembly, homodimer.

The protein resides in the cell outer membrane. It carries out the reaction a 3-(acyloxy)acyl derivative of bacterial toxin + H2O = a 3-hydroxyacyl derivative of bacterial toxin + a fatty acid + H(+). With respect to regulation, decreased activity at low temperatures (15 or 21 degrees Celsius). In terms of biological role, has lipid A 3-O-deacylase activity. Hydrolyzes the ester bond at the 3 position of lipid A, a bioactive component of lipopolysaccharide (LPS), thereby releasing the primary fatty acyl moiety. Lacks fatty acyl chain-length specificity as removes both 3-OH C10 and 3-OH C14 fatty acids from lipid A. This is Lipid A deacylase PagL from Pseudomonas aeruginosa (strain ATCC 15692 / DSM 22644 / CIP 104116 / JCM 14847 / LMG 12228 / 1C / PRS 101 / PAO1).